The following is a 391-amino-acid chain: Multidrug resistance protein MdtL (391 aa).

A run of 12 helical transmembrane segments spans residues 4-24 (FLIC…MYLV), 42-62 (IAFS…GKVA), 69-89 (PVAI…SLAE), 93-113 (LFLA…VVAF), 131-151 (LLNG…HLIM), 158-178 (SLFW…LFIL), 203-222 (FFLS…LTFV), 245-265 (ALTA…LGIF), 269-289 (TLMI…AVSP), 293-313 (VSLF…GVAM), 331-351 (LGIA…VVGI), and 356-376 (MLIG…MFVA).

Belongs to the major facilitator superfamily. DHA1 family. MdtL (TC 2.A.1.2.22) subfamily.

It localises to the cell inner membrane. Its function is as follows. Confers resistance to chloramphenicol. The polypeptide is Multidrug resistance protein MdtL (Escherichia coli O139:H28 (strain E24377A / ETEC)).